Reading from the N-terminus, the 393-residue chain is Dual-specificity RNA methyltransferase RlmN (393 aa).

Glutamate 115 acts as the Proton acceptor in catalysis. The Radical SAM core domain maps to 121 to 365 (EEDRGTLCIS…APIRKTRGDD (245 aa)). Cysteine 128 and cysteine 370 are joined by a disulfide. [4Fe-4S] cluster contacts are provided by cysteine 135, cysteine 139, and cysteine 142. Residues 194–195 (GE), serine 226, 248–250 (SFH), and asparagine 327 each bind S-adenosyl-L-methionine. Residue cysteine 370 is the S-methylcysteine intermediate of the active site.

Belongs to the radical SAM superfamily. RlmN family. It depends on [4Fe-4S] cluster as a cofactor.

It localises to the cytoplasm. It catalyses the reaction adenosine(2503) in 23S rRNA + 2 reduced [2Fe-2S]-[ferredoxin] + 2 S-adenosyl-L-methionine = 2-methyladenosine(2503) in 23S rRNA + 5'-deoxyadenosine + L-methionine + 2 oxidized [2Fe-2S]-[ferredoxin] + S-adenosyl-L-homocysteine. The catalysed reaction is adenosine(37) in tRNA + 2 reduced [2Fe-2S]-[ferredoxin] + 2 S-adenosyl-L-methionine = 2-methyladenosine(37) in tRNA + 5'-deoxyadenosine + L-methionine + 2 oxidized [2Fe-2S]-[ferredoxin] + S-adenosyl-L-homocysteine. Its function is as follows. Specifically methylates position 2 of adenine 2503 in 23S rRNA and position 2 of adenine 37 in tRNAs. m2A2503 modification seems to play a crucial role in the proofreading step occurring at the peptidyl transferase center and thus would serve to optimize ribosomal fidelity. This chain is Dual-specificity RNA methyltransferase RlmN, found in Ruegeria pomeroyi (strain ATCC 700808 / DSM 15171 / DSS-3) (Silicibacter pomeroyi).